A 2067-amino-acid chain; its full sequence is MSTVRSLGLHDSSAISFLIAEDLLPAEPSEELYSWTTSINNGPNGPVEDELVWTKSCVVWTRAGVIKRVFRLDFEKEDIKYALLTNFAVNNVKRTSDLSSLAIPQTTSQQSNRPSGSESLDGKESRRSSTSKHSSRAVVVVLKTQAHIFFLEGNSHVVPLPFEVDSVFATPRGLLFQRKVADESNTSSYPMVPPNSFMSFSQDFCASQFLDYTSGKVQRPSLSTIPAQSPSWKSRPNKRADLPRVFSLMDPHSEMGLVVTNQASRWLHTSLSGRPSGFDVLDPADEIVYVSPRDELAGTFRADPKSPLILVLTVNTITGLYTLWTARYRDNESIPSHRKKKRRDTGGTRSKRRSSHFGMATGTTTPGARPSAGRESFGPRGDNWNASVMSHSQYSTEGRPDDDEDDFASKLGQDFGEIGVPSKTSRRVSSMLARADLATSQDRITFSDLVTGSQSSTIHPGGLRQSIGAGSTRGSFGFNPRSSLPPGAGSIYSTTSSFVDPPVDKLLEELNNESLFEGIENMDLKESAAGLPEEVFLSKVESFSSKFSGSFLAPSKIKSSKRLKVVTLCPTDYASSHVGESTSMALYLVDQEAKSLTVVNIRVESVKKPAKDVVFLKRSKNKATSDERALLVQASGIQHVSGTLDVCKVVDGGLSRIITLSVNDAGATVLHLQMPWNDPIIIELPSKFMLHEMDALSSIMTVNTSREGSVNRVMADFSMTMTGLDHPAVDGKFDVVDSAKRRHKLQLCMEPTNPLVRRAFGVCRFALCGYFPDKVADGLLMGWWKTLKWLQEREVCENDLEWTALVVTLFAQAIPFIEGDQSGGTTRLTRRKRGLLRSSSGSYVDTESWESMLEQESGSAGVVASWMNTASWGWVVEQDAEDESTASYGRKPNKEPLSSSRSTCRKNTYLLRCATLTREFLRTPQGIAAVGCDGHLRKALSNSEHSIHTPLCTILVALHLLREEQKLSACDEEQSHKTLGLLAPVLAQLGGWLGWPSWNWAEDSYYGSEIASINRWQFENTRMAGPDLPAEPLPPPSIFAYLEKAWRGESCQFWTLLNLVNFDGHPRRGRLWQWCSTLTPRTLALEGFVSEMRHKLSVLERIQLLHRWGLTRSVIETFPAGISTPLYEAIIESQTHASTSWSSSFLGLIDRDDLNISSQSSTTRPPPPLSLNVSHDAIRDYHQISNSTLDIDAINSFEASAEADRFSVTRLIFREDKRFIEAARLLNQSKAPAAECHPEPEWTDSDLLEAQKEVVQLVTLRTLSIPTGRAMLAFSGRLPLLTEKLPIPSFSLQCVMKPSNVTISADRASFHEEKICWAFFHNGVSTGLAISKNSKGIDTSWILFNKPQELTNRHAGFLLALGLNGHLRSLAKWVAFKYLTPKHTMTSIGLLLGLSASYLGTMDTLVTRLLSVHVTRMLPMGAAELNLSPLTQTAGIMGIGLLYCNSQHRRMSEVMLSEIENADQEEGSATNDYLRNEGYRLAAGFALGFINLGKGKDLKGMRDMHIVERLLAVAVGTKNVDLAHVLDRATAGATIALAIIFMKTNDETLAQKVDIPDTTVRFDYVRPDLFLLRTLARHIIMWDRIQACDEWFIGSLPEVYRRRYRLTGVRRLKSNDMPFFNIIAGLCFALGLRFAGSPDPTVRDILLSYLDQFIRISRLPAPNYDARLARNSVRHCQDVVALSLAAVMAGTGDLALFRRLRSLHGRVDPDTPYGSHMAAHMAIGMLFLGGGSYTLGTSNLAVASLICSLYPIFPTTVLDNECHLQAFRHLWVLAAEPRCIVPRDLDSRRPISMPITVTDSDGVSGTLTAPCLLPDLNRIAKVEVLSPDYWPLVLDFDSNPGVREKFQQGDQSIYLRRKATYNPTGSSFFSSTLAGLSSAQDILPSASTSASNQGKGLSPSALPNVSALLSKESHRFTPKPAAQSIWDWIFQLDSLHGILDAREKELVLPSSFPARPRPSSTPHDAPWLRQSAVDSKLLAESIAQNVIQSATGRGGNPDEVRDRLWQLRLLFAWIDAGSSFPSESDEEKRDRQETGSMPSSGHWLRRDYVEDLRWKIWGVQARGSEGS.

Over residues 100 to 118 the composition is skewed to polar residues; sequence SLAIPQTTSQQSNRPSGSE. Disordered regions lie at residues 100 to 132, 332 to 408, and 452 to 480; these read SLAIPQTTSQQSNRPSGSESLDGKESRRSSTSK, ESIP…DDFA, and GSQSSTIHPGGLRQSIGAGSTRGSFGFNP. The short motif at 336–347 is the Nuclear localization signal element; that stretch reads SHRKKKRRDTGG. The segment covering 336–355 has biased composition (basic residues); the sequence is SHRKKKRRDTGGTRSKRRSS. Residues 384 to 396 are compositionally biased toward polar residues; it reads WNASVMSHSQYST. PC repeat units follow at residues 1434-1465, 1482-1520, 1532-1562, and 1625-1659; these read AGIMGIGLLYCNSQHRRMSEVMLSEIENADQE, AAGFALGFINLGKGKDLKGMRDMHIVERLLAVAVGTKNV, GATIALAIIFMKTNDETLAQKVDIPDTTVRF, and GLCFALGLRFAGSPDPTVRDILLSYLDQFIRISRL. A disordered region spans residues 2020 to 2042; it reads FPSESDEEKRDRQETGSMPSSGH.

Belongs to the APC1 family.

Negative regulator of mitosis in E.nidulans. This protein is part of a regulatory pathway that includes the nimA protein kinase. It is required to prevent premature entry into mitosis. Mutations to this protein both cause cells to enter mitosis and prevent them from leaving mitosis. In Emericella nidulans (strain FGSC A4 / ATCC 38163 / CBS 112.46 / NRRL 194 / M139) (Aspergillus nidulans), this protein is Negative regulator of mitosis (bimE).